Here is a 193-residue protein sequence, read N- to C-terminus: N-(5'-phosphoribosyl)anthranilate isomerase (193 aa).

Belongs to the TrpF family.

The catalysed reaction is N-(5-phospho-beta-D-ribosyl)anthranilate = 1-(2-carboxyphenylamino)-1-deoxy-D-ribulose 5-phosphate. Its pathway is amino-acid biosynthesis; L-tryptophan biosynthesis; L-tryptophan from chorismate: step 3/5. The sequence is that of N-(5'-phosphoribosyl)anthranilate isomerase from Streptococcus mutans serotype c (strain ATCC 700610 / UA159).